The chain runs to 773 residues: Polymeric immunoglobulin receptor (773 aa).

A signal peptide spans 1–18 (MALFLLTCLLAVFSAATA). Residues 19–647 (QSSLLGPSSI…SASGQSGSAK (629 aa)) lie on the Extracellular side of the membrane. Residues 25 to 131 (PSSIFGPGEV…RGLDFGVNVL (107 aa)) enclose the Ig-like V-type 1; required for binding to polymeric IgA and IgM domain. 5 disulfides stabilise this stretch: Cys46/Cys115, Cys155/Cys225, Cys260/Cys324, Cys369/Cys438, and Cys478/Cys538. An N-linked (GlcNAc...) asparagine; in variant N-88 glycan is attached at Lys88. Asn108 carries N-linked (GlcNAc...) asparagine glycosylation. Ig-like V-type domains are found at residues 138 to 232 (PDDV…SDPT), 233 to 340 (AEEQ…TQLR), 352 to 455 (RSPP…LQIV), and 461 to 557 (PTID…VELT). Residue Asn418 is glycosylated (N-linked (GlcNAc...) asparagine). Residues 619–641 (AVQSAEDPASGSRASVDASSASG) are disordered. Over residues 632–641 (ASVDASSASG) the composition is skewed to low complexity. A helical transmembrane segment spans residues 648-670 (VLISTLVPLGLVLAAGAMAVAIA). The Cytoplasmic portion of the chain corresponds to 671–773 (RARHRRNVDR…AEHQDGPKEA (103 aa)). 4 positions are modified to phosphoserine: Ser682, Ser691, Ser698, and Ser744. Positions 725–746 (ATATESTVEIEEPKKAKRSSKE) are disordered. Residues 735 to 746 (EEPKKAKRSSKE) show a composition bias toward basic and acidic residues.

Interacts (mainly via CDR1-like domain) with dimeric IgA. Interacts (mainly via CDR2-like domain) with pentameric IgM. As to quaternary structure, either free or part of the secretory IgA (sIgA) complex that consists of two, four or five IgA monomers, and two additional non-Ig polypeptides, namely the JCHAIN and the secretory component (the proteolytic product of PIGR). Free secretory component interacts with bacterial antigens toxA of C.difficile and eae of E.coli. In terms of processing, N-glycosylated. N-glycosylation is required for anchoring IgA molecules to mucus, but is not necessary for Ig binding.

It is found in the cell membrane. The protein resides in the secreted. In terms of biological role, mediates selective transcytosis of polymeric IgA and IgM across mucosal epithelial cells. Binds polymeric IgA and IgM at the basolateral surface of epithelial cells. The complex is then transported across the cell to be secreted at the apical surface. During this process, a cleavage occurs that separates the extracellular (known as the secretory component) from the transmembrane segment. Its function is as follows. Through its N-linked glycans ensures anchoring of secretory IgA (sIgA) molecules to mucus lining the epithelial surface to neutralize extracellular pathogens. On its own (free form) may act as a non-specific microbial scavenger to prevent pathogen interaction with epithelial cells. This is Polymeric immunoglobulin receptor (PIGR) from Oryctolagus cuniculus (Rabbit).